The chain runs to 186 residues: Golgi apparatus membrane protein-like protein ECHIDNA (186 aa).

M1 is subject to N-acetylmethionine. A run of 3 helical transmembrane segments spans residues 35–55 (ILSA…VLLA), 108–128 (FWWT…FSLI), and 132–152 (ADYL…IIGF).

The protein belongs to the TVP23 family. As to quaternary structure, component of a trans-Golgi network (TGN)-localized ECH/YIP4 complex made of ECH, YIP4A and YIP4B. Interacts directly with YIP4A and YIP4B.

The protein resides in the golgi apparatus. Its subcellular location is the trans-Golgi network membrane. It is found in the early endosome membrane. Mediates trans-Golgi-network trafficking and cell elongation. Required for keeping the appropriate balance between secretory trafficking and vacuolar targeting of a subset of proteins. The ECH/YIP4 complex is involved in the modulation of the trans-Golgi network (TGN)-mediated trafficking of some proteins and cell wall components (e.g. pectin and hemicellulose) to the cell wall in dark-grown hypocotyls and in secretory cells of the seed coat. This chain is Golgi apparatus membrane protein-like protein ECHIDNA, found in Arabidopsis thaliana (Mouse-ear cress).